Here is a 132-residue protein sequence, read N- to C-terminus: uncharacterized protein (132 aa).

Lysine 59 participates in a covalent cross-link: Glycyl lysine isopeptide (Lys-Gly) (interchain with G-Cter in SAMP2).

The protein belongs to the OsmC/Ohr family.

This is an uncharacterized protein from Haloferax volcanii (strain ATCC 29605 / DSM 3757 / JCM 8879 / NBRC 14742 / NCIMB 2012 / VKM B-1768 / DS2) (Halobacterium volcanii).